Here is a 617-residue protein sequence, read N- to C-terminus: Dihydroxy-acid dehydratase (617 aa).

Mg(2+) is bound at residue Asp-81. Position 122 (Cys-122) interacts with [2Fe-2S] cluster. Mg(2+) is bound by residues Asp-123 and Lys-124. N6-carboxylysine is present on Lys-124. Cys-195 is a [2Fe-2S] cluster binding site. Glu-492 lines the Mg(2+) pocket. Ser-518 serves as the catalytic Proton acceptor.

The protein belongs to the IlvD/Edd family. As to quaternary structure, homodimer. [2Fe-2S] cluster is required as a cofactor. Mg(2+) serves as cofactor.

The enzyme catalyses (2R)-2,3-dihydroxy-3-methylbutanoate = 3-methyl-2-oxobutanoate + H2O. It catalyses the reaction (2R,3R)-2,3-dihydroxy-3-methylpentanoate = (S)-3-methyl-2-oxopentanoate + H2O. It participates in amino-acid biosynthesis; L-isoleucine biosynthesis; L-isoleucine from 2-oxobutanoate: step 3/4. The protein operates within amino-acid biosynthesis; L-valine biosynthesis; L-valine from pyruvate: step 3/4. Functions in the biosynthesis of branched-chain amino acids. Catalyzes the dehydration of (2R,3R)-2,3-dihydroxy-3-methylpentanoate (2,3-dihydroxy-3-methylvalerate) into 2-oxo-3-methylpentanoate (2-oxo-3-methylvalerate) and of (2R)-2,3-dihydroxy-3-methylbutanoate (2,3-dihydroxyisovalerate) into 2-oxo-3-methylbutanoate (2-oxoisovalerate), the penultimate precursor to L-isoleucine and L-valine, respectively. In Xanthobacter autotrophicus (strain ATCC BAA-1158 / Py2), this protein is Dihydroxy-acid dehydratase.